The following is a 534-amino-acid chain: Probable alpha-galactosidase A (534 aa).

The first 25 residues, Met-1–Ser-25, serve as a signal peptide directing secretion. Cysteines 47 and 79 form a disulfide. 4 N-linked (GlcNAc...) asparagine glycosylation sites follow: Asn-50, Asn-88, Asn-94, and Asn-124. Cysteines 127 and 157 form a disulfide. The active-site Nucleophile is the Asp-155. Residue Asn-204 is glycosylated (N-linked (GlcNAc...) asparagine). Asp-213 functions as the Proton donor in the catalytic mechanism. The region spanning Cys-413–Leu-534 is the Ricin B-type lectin domain. The cysteines at positions 430 and 443 are disulfide-linked. An N-linked (GlcNAc...) asparagine glycan is attached at Asn-444. Cys-468 and Cys-481 form a disulfide bridge.

Belongs to the glycosyl hydrolase 27 family.

It is found in the secreted. The catalysed reaction is Hydrolysis of terminal, non-reducing alpha-D-galactose residues in alpha-D-galactosides, including galactose oligosaccharides, galactomannans and galactolipids.. Functionally, hydrolyzes a variety of simple alpha-D-galactoside as well as more complex molecules such as oligosaccharides and polysaccharides. This chain is Probable alpha-galactosidase A (aglA), found in Aspergillus flavus (strain ATCC 200026 / FGSC A1120 / IAM 13836 / NRRL 3357 / JCM 12722 / SRRC 167).